Reading from the N-terminus, the 424-residue chain is ATP-sensitive inward rectifier potassium channel 8 (424 aa).

Residues 1 to 69 lie on the Cytoplasmic side of the membrane; sequence MLARKSIIPE…IFTTLVDLKW (69 aa). Position 6 is a phosphoserine (Ser6). Residues 70–94 form a helical membrane-spanning segment; sequence RHTLVIFTMSFLCSWLLFAIMWWLV. Residues 95–126 are Extracellular-facing; sequence AFAHGDIYAYMEKGTMEKSGLESAVCVTNVRS. An intramembrane region (helical; Pore-forming) is located at residues 127-138; it reads FTSAFLFSIEVQ. Positions 139-145 form an intramembrane region, pore-forming; it reads VTIGFGG. The short motif at 140 to 145 is the Selectivity filter element; it reads TIGFGG. Residues 146–154 are Extracellular-facing; sequence RMMTEECPL. The chain crosses the membrane as a helical span at residues 155-176; the sequence is AITVLILQNIVGLIINAVMLGC. Residues 177–424 are Cytoplasmic-facing; it reads IFMKTAQAHR…PEGNQCPSES (248 aa). Residues 373–409 are disordered; it reads ELSHQNSLRKRNSMRRNNSMRRNNSIRRNNSSLMVPK. Residues 387–404 are compositionally biased toward low complexity; the sequence is RRNNSMRRNNSIRRNNSS.

It belongs to the inward rectifier-type potassium channel (TC 1.A.2.1) family. KCNJ8 subfamily. In terms of assembly, interacts with ABCC9.

The protein resides in the membrane. The enzyme catalyses K(+)(in) = K(+)(out). Its function is as follows. Inward rectifier potassium channels are characterized by a greater tendency to allow potassium to flow into the cell rather than out of it. Their voltage dependence is regulated by the concentration of extracellular potassium; as external potassium is raised, the voltage range of the channel opening shifts to more positive voltages. The inward rectification is mainly due to the blockage of outward current by internal magnesium. This channel is activated by internal ATP and can be blocked by external barium. Can form a sulfonylurea-sensitive but ATP-insensitive potassium channel with ABCC9. The polypeptide is ATP-sensitive inward rectifier potassium channel 8 (Kcnj8) (Mus musculus (Mouse)).